Consider the following 621-residue polypeptide: Transmembrane protein 200C (621 aa).

The disordered stretch occupies residues Ala-12–Asn-37. The span at Pro-25 to Lys-36 shows a compositional bias: basic residues. A helical membrane pass occupies residues Gly-53–Gly-73. The disordered stretch occupies residues Gly-80–Thr-147. A compositionally biased stretch (low complexity) spans Ser-125–Thr-147. Residues Val-167 to Leu-187 traverse the membrane as a helical segment. Disordered regions lie at residues Trp-284–Pro-315, Ala-347–Ala-368, and Leu-384–Lys-598. Low complexity predominate over residues Ala-290–Pro-303. A compositionally biased stretch (basic and acidic residues) spans Pro-405–Leu-418. Over residues Arg-479–Pro-490 the composition is skewed to pro residues. Composition is skewed to low complexity over residues Gly-491–Ser-505 and Gly-523–Ser-533. Over residues Glu-586–Phe-595 the composition is skewed to polar residues.

Belongs to the TMEM200 family.

Its subcellular location is the membrane. In Homo sapiens (Human), this protein is Transmembrane protein 200C (TMEM200C).